Reading from the N-terminus, the 304-residue chain is Acetyl-coenzyme A carboxylase carboxyl transferase subunit beta (304 aa).

The region spanning 23–292 (VWTKCDSCGQ…PNPEAPREGV (270 aa)) is the CoA carboxyltransferase N-terminal domain. Cys27, Cys30, Cys46, and Cys49 together coordinate Zn(2+). Residues 27 to 49 (CDSCGQVLYRAELERNLEVCPKC) form a C4-type zinc finger. A disordered region spans residues 284 to 304 (NPEAPREGVVVPPVPDQEPEA). A compositionally biased stretch (pro residues) spans 295–304 (PPVPDQEPEA).

It belongs to the AccD/PCCB family. Acetyl-CoA carboxylase is a heterohexamer composed of biotin carboxyl carrier protein (AccB), biotin carboxylase (AccC) and two subunits each of ACCase subunit alpha (AccA) and ACCase subunit beta (AccD). Requires Zn(2+) as cofactor.

The protein localises to the cytoplasm. The catalysed reaction is N(6)-carboxybiotinyl-L-lysyl-[protein] + acetyl-CoA = N(6)-biotinyl-L-lysyl-[protein] + malonyl-CoA. It participates in lipid metabolism; malonyl-CoA biosynthesis; malonyl-CoA from acetyl-CoA: step 1/1. In terms of biological role, component of the acetyl coenzyme A carboxylase (ACC) complex. Biotin carboxylase (BC) catalyzes the carboxylation of biotin on its carrier protein (BCCP) and then the CO(2) group is transferred by the transcarboxylase to acetyl-CoA to form malonyl-CoA. The sequence is that of Acetyl-coenzyme A carboxylase carboxyl transferase subunit beta from Shigella boydii serotype 18 (strain CDC 3083-94 / BS512).